The chain runs to 96 residues: (4S)-4-hydroxy-5-phosphonooxypentane-2,3-dione isomerase (96 aa).

The region spanning 2 to 91 is the ABM domain; the sequence is HVTLVEINVK…MTGPRKKTTF (90 aa).

The protein belongs to the LsrG family. Homodimer.

The protein resides in the cytoplasm. The catalysed reaction is (2S)-2-hydroxy-3,4-dioxopentyl phosphate = 3-hydroxy-2,4-dioxopentyl phosphate. Its function is as follows. Involved in the degradation of phospho-AI-2, thereby terminating induction of the lsr operon and closing the AI-2 signaling cycle. Catalyzes the conversion of (4S)-4-hydroxy-5-phosphonooxypentane-2,3-dione (P-DPD) to 3-hydroxy-5-phosphonooxypentane-2,4-dione (P-HPD). This is (4S)-4-hydroxy-5-phosphonooxypentane-2,3-dione isomerase from Yersinia enterocolitica serotype O:8 / biotype 1B (strain NCTC 13174 / 8081).